The primary structure comprises 1410 residues: non-specific serine/threonine protein kinase (1410 aa).

The 273-residue stretch at 27-299 folds into the Protein kinase domain; it reads THYVSQLNNS…LLEKYRTIYF (273 aa). ATP-binding positions include 33 to 41 and lysine 54; that span reads LNNSRFLKT. Aspartate 147 serves as the catalytic Proton acceptor. 5 HEAT repeats span residues 441-478, 485-525, 556-594, 596-633, and 635-672; these read TKLDRTLPYLVAALEDDSTRVKVMAMNCVTTLIKEVKH, NIFV…KANL, RKLQQLFEDLTVSILTDPEISVKVALLKNILPLCKYFGR, KTNDVILSHLITYLNDRDPALRMYLVECISGIAILLGP, and TMEQYILPLIIQTITDEEELVVVSVLKNLKDLLKTRFV. 3 WD repeats span residues 1037-1076, 1187-1226, and 1230-1273; these read FDGTLLQSEVLLGTKSFMIYGSDQGALTVWDIDRLANEKS, ADYGCTISMVLDDKNNLLFFGTVSGIIEMWDARYFVQIRA, and GESL…CKHV.

It belongs to the protein kinase superfamily. Ser/Thr protein kinase family. As to quaternary structure, component of the autophagy-specific VPS34 PI3-kinase complex I composed of VPS15, VPS30, VPS34, ATG14 and ATG38; and of the VPS34 PI3-kinase complex II composed of VPS15, VPS30, VPS34 and VPS38. In terms of processing, autophosphorylated.

The protein localises to the golgi apparatus. The protein resides in the trans-Golgi network membrane. Its subcellular location is the endosome membrane. It catalyses the reaction L-seryl-[protein] + ATP = O-phospho-L-seryl-[protein] + ADP + H(+). It carries out the reaction L-threonyl-[protein] + ATP = O-phospho-L-threonyl-[protein] + ADP + H(+). In terms of biological role, serine/threonine-protein kinase that plays a role in signaling in modulation of host immune response, intracellular survival and virulence. Required for impediment of phagosomal maturation in THP-1 macrophages. Regulatory subunit of the autophagy-specific VPS34 PI3-kinase complex I essential to recruit the ATG8-phosphatidylinositol conjugate and the ATG12-ATG5 conjugate to the pre-autophagosomal structure. Within the PS34 PI3-kinase complex I, VPS15-mediated phosphorylation of VPS34 may be required for recruiting VPS34 to the membrane but not for activation of its PI3K activity. Is also involved in endosome-to-Golgi retrograde transport as part of the VPS34 PI3-kinase complex II. This second complex is required for the endosome-to-Golgi retrieval of PEP1 and KEX2, and the recruitment of VPS5 and VPS7, two components of the retromer complex, to endosomal membranes (probably through the synthesis of a specific pool of phosphatidylinositol 3-phosphate recruiting the retromer to the endosomes). By regulating VPS34 kinase activity, VPS15 appears to be essential for the efficient delivery of soluble hydrolases to the yeast vacuole. This is non-specific serine/threonine protein kinase from Candida glabrata (strain ATCC 2001 / BCRC 20586 / JCM 3761 / NBRC 0622 / NRRL Y-65 / CBS 138) (Yeast).